The sequence spans 256 residues: POU domain class 2-associating factor 1 (256 aa).

Positions 1–23 (MLWQKPTAPEQAPAPARPYQGVR) are disordered. An OCA domain is found at 16–38 (ARPYQGVRVKEPVKELLRRKRGH).

Belongs to the POU2AF family. As to quaternary structure, interacts with POU2F1/OCT1 and POU2F2/OCT2; the interaction increases POU2F1 and POU2F2 transactivation activity. In terms of processing, ubiquitinated; mediated by SIAH1 or SIAH2 and leading to its subsequent proteasomal degradation. In terms of tissue distribution, B-cell specific. Detected in mainly in spleen, but also in thymus, periphral blood leukocyte and small intestine.

The protein resides in the nucleus. Transcriptional coactivator that specifically associates with either POU2F1/OCT1 or POU2F2/OCT2. It boosts the POU2F1/OCT1 mediated promoter activity and to a lesser extent, that of POU2F2/OCT2. It recognizes the POU domains of POU2F1/OCT1 and POU2F2/OCT2. It is essential for the response of B-cells to antigens and required for the formation of germinal centers. Regulates IL6 expression in B cells as POU2F2/OCT2 coactivator. The sequence is that of POU domain class 2-associating factor 1 from Homo sapiens (Human).